Consider the following 53-residue polypeptide: Small polypeptide DEVIL 16 (53 aa).

N-linked (GlcNAc...) asparagine glycosylation occurs at asparagine 6. A required for DVL/RTFL small polypeptide activity region spans residues 14–45; sequence TFGQKCSHVVKKQRAKFYILRRCIAMLVCWHD. A helical transmembrane segment spans residues 30–46; that stretch reads FYILRRCIAMLVCWHDQ.

Belongs to the DVL/RTFL small polypeptides family. As to expression, mostly expressed in stems, flower buds, flowers and seedling shoots, to a lesser extent, in roots and young cauline leaves, but not in mature rosette leaves. Barely observed in cotyledons and leaf primordia.

Its subcellular location is the cell membrane. Small polypeptide acting as a regulatory molecule which coordinates cellular responses required for differentiation, growth and development, probably by restricting polar cell proliferation in lateral organs (e.g. leaves) and coordinating socket cell recruitment and differentiation at trichome sites. Regulates the positional cue and cell proliferation along the body axis. In Arabidopsis thaliana (Mouse-ear cress), this protein is Small polypeptide DEVIL 16.